Consider the following 70-residue polypeptide: uncharacterized protein (70 aa).

A helical transmembrane segment spans residues 12 to 32 (VLFMNFFSVFVCTIGTLFLVF).

It localises to the membrane. This is an uncharacterized protein from Saccharomyces cerevisiae (strain ATCC 204508 / S288c) (Baker's yeast).